The following is a 220-amino-acid chain: Vesicle-associated membrane protein 7 (220 aa).

Residues A2–K188 lie on the Cytoplasmic side of the membrane. A Longin domain is found at V7–L110. A v-SNARE coiled-coil homology domain is found at Q125 to K185. Residues L189 to C209 traverse the membrane as a helical; Anchor for type IV membrane protein segment. Topologically, residues G210–K220 are vesicular.

The protein belongs to the synaptobrevin family.

The protein localises to the cytoplasmic vesicle. The protein resides in the secretory vesicle membrane. It localises to the golgi apparatus. It is found in the trans-Golgi network membrane. Its subcellular location is the late endosome membrane. The protein localises to the lysosome membrane. The protein resides in the endoplasmic reticulum membrane. It localises to the phagosome membrane. It is found in the synapse. Its subcellular location is the synaptosome. In terms of biological role, involved in the targeting and/or fusion of transport vesicles to their target membrane during transport of proteins from the early endosome to the lysosome. Required for heterotypic fusion of late endosomes with lysosomes and homotypic lysosomal fusion. Required for calcium regulated lysosomal exocytosis. Involved in the export of chylomicrons from the endoplasmic reticulum to the cis Golgi. Required for focal exocytosis of late endocytic vesicles during phagosome formation. The chain is Vesicle-associated membrane protein 7 from Gallus gallus (Chicken).